A 424-amino-acid polypeptide reads, in one-letter code: MLDLKFIRDNLELVRENIKNRGLKLELDLLISFDDERRKLITKIGELNALRNENANAMKDNIGDSSRHYLIEKGKALKAEIMDLEERLGYLTSRLLVEHKRIPNISAPDVPVGVSEDENVVLKVSGNIPKFDFKPKDHLEIGIHLDLFDFEKAREVSGNKFYYLKNEAVFLELAMINFAFSKLKAKGFDLFITPDVAREFIVDGIGFNPRGAESNIYKIEDTDKYLVGTAEITLGGYYYNTILDLKSPLKMAGLSHCFRKEAGAAGQFSKGLYRVHQFSKVEMFCFCRSEDSDRIHNEFLELEEEIFIELEIPYRVLNVCSSDLGAPAYKKYDIEAWMPGRGENGDYGEVTSTSNCTDYQSRRLKIRYKEDGQNKFVHMINGTAIASTRTLIAILENFQDAKGGVRIPKSLVKYTGFDYISPKN.

229-231 (TAE) contacts L-serine. ATP is bound by residues 259-261 (RKE) and Val275. Residue Glu282 participates in L-serine binding. 349-352 (EVTS) is an ATP binding site. L-serine is bound at residue Thr383.

The protein belongs to the class-II aminoacyl-tRNA synthetase family. Type-1 seryl-tRNA synthetase subfamily. As to quaternary structure, homodimer. The tRNA molecule binds across the dimer.

The protein resides in the cytoplasm. The catalysed reaction is tRNA(Ser) + L-serine + ATP = L-seryl-tRNA(Ser) + AMP + diphosphate + H(+). It carries out the reaction tRNA(Sec) + L-serine + ATP = L-seryl-tRNA(Sec) + AMP + diphosphate + H(+). The protein operates within aminoacyl-tRNA biosynthesis; selenocysteinyl-tRNA(Sec) biosynthesis; L-seryl-tRNA(Sec) from L-serine and tRNA(Sec): step 1/1. Its function is as follows. Catalyzes the attachment of serine to tRNA(Ser). Is also able to aminoacylate tRNA(Sec) with serine, to form the misacylated tRNA L-seryl-tRNA(Sec), which will be further converted into selenocysteinyl-tRNA(Sec). The polypeptide is Serine--tRNA ligase (Borrelia recurrentis (strain A1)).